A 424-amino-acid polypeptide reads, in one-letter code: Glycerol-3-phosphate dehydrogenase [NAD(+)] (424 aa).

NAD(+) is bound by residues 79-84 (GSGNWG), F111, and F167. K190 is a binding site for substrate. A223 is a binding site for NAD(+). The active-site Proton acceptor is the K283. Residues R348 and Q377 each contribute to the NAD(+) site. 348–349 (RN) provides a ligand contact to substrate.

The protein belongs to the NAD-dependent glycerol-3-phosphate dehydrogenase family.

It carries out the reaction sn-glycerol 3-phosphate + NAD(+) = dihydroxyacetone phosphate + NADH + H(+). This is Glycerol-3-phosphate dehydrogenase [NAD(+)] (GPD) from Eremothecium gossypii (strain ATCC 10895 / CBS 109.51 / FGSC 9923 / NRRL Y-1056) (Yeast).